We begin with the raw amino-acid sequence, 246 residues long: 1-(5-phosphoribosyl)-5-[(5-phosphoribosylamino)methylideneamino] imidazole-4-carboxamide isomerase (246 aa).

The active-site Proton acceptor is the D8. D130 acts as the Proton donor in catalysis.

It belongs to the HisA/HisF family.

Its subcellular location is the cytoplasm. It carries out the reaction 1-(5-phospho-beta-D-ribosyl)-5-[(5-phospho-beta-D-ribosylamino)methylideneamino]imidazole-4-carboxamide = 5-[(5-phospho-1-deoxy-D-ribulos-1-ylimino)methylamino]-1-(5-phospho-beta-D-ribosyl)imidazole-4-carboxamide. It participates in amino-acid biosynthesis; L-histidine biosynthesis; L-histidine from 5-phospho-alpha-D-ribose 1-diphosphate: step 4/9. This Shigella dysenteriae serotype 1 (strain Sd197) protein is 1-(5-phosphoribosyl)-5-[(5-phosphoribosylamino)methylideneamino] imidazole-4-carboxamide isomerase.